Consider the following 89-residue polypeptide: Translation initiation factor IF-1, chloroplastic (89 aa).

One can recognise an S1-like domain in the interval 1–72; sequence MKKQDLIDME…TKGRIIYRLR (72 aa).

Belongs to the IF-1 family. Component of the 30S ribosomal translation pre-initiation complex which assembles on the 30S ribosome in the order IF-2 and IF-3, IF-1 and N-formylmethionyl-tRNA(fMet); mRNA recruitment can occur at any time during PIC assembly.

Its subcellular location is the plastid. It is found in the chloroplast. Functionally, one of the essential components for the initiation of protein synthesis. Stabilizes the binding of IF-2 and IF-3 on the 30S subunit to which N-formylmethionyl-tRNA(fMet) subsequently binds. Helps modulate mRNA selection, yielding the 30S pre-initiation complex (PIC). Upon addition of the 50S ribosomal subunit IF-1, IF-2 and IF-3 are released leaving the mature 70S translation initiation complex. The polypeptide is Translation initiation factor IF-1, chloroplastic (Angiopteris evecta (Mule's foot fern)).